The primary structure comprises 1021 residues: Caspase recruitment domain-containing protein 10 (1021 aa).

The segment at 1 to 24 is disordered; the sequence is MQGRADAGEADEEAGAGSGSEAEE. The residue at position 18 (S18) is a Phosphoserine. Residues 23–115 enclose the CARD domain; that stretch reads EEDALWERIE…EHFTLLTGQE (93 aa). Residues 138–450 adopt a coiled-coil conformation; the sequence is TEVRRLREAR…LEAQLQRTQG (313 aa). Disordered stretches follow at residues 475–544, 597–616, and 790–809; these read EFPS…MSDI, SPPA…PGLG, and LVRP…QLPA. 2 stretches are compositionally biased toward basic and acidic residues: residues 495–508 and 525–535; these read HTSE…KEIN and RQREEDPEPPK.

As to quaternary structure, CARD10 and BCL10 bind to each other by CARD-CARD interaction. They both participate in a complex with MALT1, where MALT1 binds to BCL10. Interacts with TMEM43; this interaction is essential for EGFR-mediated NF-kappa-B activation. As to expression, highly expressed in kidney, heart followed by brain, lung, liver, skeletal muscle and testis.

In terms of biological role, scaffold protein that plays an important role in mediating the activation of NF-kappa-B via BCL10 or EGFR. The sequence is that of Caspase recruitment domain-containing protein 10 (Card10) from Mus musculus (Mouse).